We begin with the raw amino-acid sequence, 620 residues long: Chaperone protein HscA homolog (620 aa).

The protein belongs to the heat shock protein 70 family.

In terms of biological role, chaperone involved in the maturation of iron-sulfur cluster-containing proteins. Has a low intrinsic ATPase activity which is markedly stimulated by HscB. In Shewanella sp. (strain ANA-3), this protein is Chaperone protein HscA homolog.